We begin with the raw amino-acid sequence, 273 residues long: DnaJ homolog subfamily C member 27 (273 aa).

The required for interaction with MAPK1 stretch occupies residues 1 to 18; sequence MEANMPKRKEPGRSLRIK. GTP is bound by residues 23–30, 71–75, and 134–137; these read GNAEVGKS, DMAGH, and NKID. Residues 217-273 enclose the J domain; sequence DSWDMLGVKPGASRDEVNKAYRKLAVLLHPDKCVAPGSEDAFKAVVNARTALLKNIK.

Belongs to the small GTPase superfamily. Rab family. Interacts directly with MAPK1 (wild-type and kinase-deficient forms). Interacts directly (in GTP-bound form) with MAP2K1 (wild-type and kinase-deficient forms). Overexpressed in gastrointestinal cancers; expression correlates with later tumor-node-metastasis stages of colorectal cancers.

The protein resides in the nucleus. GTPase which can activate the MEK/ERK pathway and induce cell transformation when overexpressed. May act as a nuclear scaffold for MAPK1, probably by association with MAPK1 nuclear export signal leading to enhanced ERK1/ERK2 signaling. The chain is DnaJ homolog subfamily C member 27 (DNAJC27) from Homo sapiens (Human).